A 488-amino-acid chain; its full sequence is Glutamyl-tRNA(Gln) amidotransferase subunit A (488 aa).

Catalysis depends on charge relay system residues K80 and S155. S179 serves as the catalytic Acyl-ester intermediate.

Belongs to the amidase family. GatA subfamily. In terms of assembly, heterotrimer of A, B and C subunits.

The catalysed reaction is L-glutamyl-tRNA(Gln) + L-glutamine + ATP + H2O = L-glutaminyl-tRNA(Gln) + L-glutamate + ADP + phosphate + H(+). In terms of biological role, allows the formation of correctly charged Gln-tRNA(Gln) through the transamidation of misacylated Glu-tRNA(Gln) in organisms which lack glutaminyl-tRNA synthetase. The reaction takes place in the presence of glutamine and ATP through an activated gamma-phospho-Glu-tRNA(Gln). This is Glutamyl-tRNA(Gln) amidotransferase subunit A from Chloroflexus aggregans (strain MD-66 / DSM 9485).